Reading from the N-terminus, the 90-residue chain is Barrier-to-autointegration factor-like protein (90 aa).

It belongs to the BAF family. Homodimer. Heterodimerizes with BANF1.

The protein resides in the nucleus. Its subcellular location is the cytoplasm. May play a role in BANF1 regulation and influence tissue-specific roles of BANF1. In Bos taurus (Bovine), this protein is Barrier-to-autointegration factor-like protein (BANF2).